The sequence spans 208 residues: Probable GTP-binding protein EngB (208 aa).

Positions L23–T205 constitute an EngB-type G domain. Residues G31–S38, G57–L61, D84–G87, T154–D157, and F182–A184 each bind GTP. Residues S38 and T59 each contribute to the Mg(2+) site.

Belongs to the TRAFAC class TrmE-Era-EngA-EngB-Septin-like GTPase superfamily. EngB GTPase family. Requires Mg(2+) as cofactor.

Its function is as follows. Necessary for normal cell division and for the maintenance of normal septation. In Helicobacter pylori (strain G27), this protein is Probable GTP-binding protein EngB.